A 174-amino-acid polypeptide reads, in one-letter code: Peptide deformylase (174 aa).

Fe cation-binding residues include Cys94 and His136. The active site involves Glu137. Residue His140 coordinates Fe cation.

It belongs to the polypeptide deformylase family. The cofactor is Fe(2+).

The enzyme catalyses N-terminal N-formyl-L-methionyl-[peptide] + H2O = N-terminal L-methionyl-[peptide] + formate. In terms of biological role, removes the formyl group from the N-terminal Met of newly synthesized proteins. Requires at least a dipeptide for an efficient rate of reaction. N-terminal L-methionine is a prerequisite for activity but the enzyme has broad specificity at other positions. The chain is Peptide deformylase from Maricaulis maris (strain MCS10) (Caulobacter maris).